Here is a 528-residue protein sequence, read N- to C-terminus: U6 snRNA (guanine-N(2))-methyltransferase THUMPD2 (528 aa).

The span at 154–168 shows a compositional bias: basic and acidic residues; sequence QEVAKDHGESQEDKL. Disordered regions lie at residues 154 to 200 and 437 to 460; these read QEVA…ADAQ and MKTLSNPDRTGAPDTASPSQRASS. Positions 162-266 constitute a THUMP domain; the sequence is ESQEDKLLQG…DAYSVVGIPL (105 aa).

It belongs to the methyltransferase superfamily. Part of the heterodimeric THUMPD2-TRM112 methyltransferase complex; this complex forms an active tRNA methyltransferase, where TRMT112 acts as an activator of the catalytic subunit THUMPD2.

The protein localises to the nucleus. It catalyses the reaction guanosine in U6 snRNA + S-adenosyl-L-methionine = N(2)-methylguanosine in U6 snRNA + S-adenosyl-L-homocysteine + H(+). Catalytic subunit of the THUMPD2-TRM112 methyltransferase complex, that specifically mediates the S-adenosyl-L-methionine-dependent N(2)-methylation of guanosine nucleotides, most probably at position 72 (m2G72), in the U6snRNA of the major spliceosome. This modification in the U6 snRNA affects the constitutive splicing efficiency of introns that have suboptimal splice sites and can impact final mRNA levels. This Mus musculus (Mouse) protein is U6 snRNA (guanine-N(2))-methyltransferase THUMPD2.